The chain runs to 646 residues: Centrosomal protein of 72 kDa (646 aa).

LRR repeat units lie at residues E28–L49, A54–V75, and S76–H97. The LRRCT domain maps to N110–H149. A phosphoserine mark is found at S117 and S236. Disordered stretches follow at residues S300 to V342 and G357 to R399. A compositionally biased stretch (low complexity) spans A307–K319. S380 carries the phosphoserine modification. Residues E383–S392 are compositionally biased toward basic and acidic residues. S402 bears the Phosphoserine mark. A coiled-coil region spans residues L476–S622.

Belongs to the CEP72 family. Interacts with KIZ, PCM1 and CDK5RAP2.

It is found in the cytoplasm. The protein resides in the cytoskeleton. The protein localises to the microtubule organizing center. It localises to the centrosome. Its subcellular location is the centriolar satellite. Involved in the recruitment of key centrosomal proteins to the centrosome. Provides centrosomal microtubule-nucleation activity on the gamma-tubulin ring complexes (gamma-TuRCs) and has critical roles in forming a focused bipolar spindle, which is needed for proper tension generation between sister chromatids. Required for localization of KIZ, AKAP9 and gamma-tubulin ring complexes (gamma-TuRCs). Involved in centriole duplication. Required for CDK5RAP22, CEP152, WDR62 and CEP63 centrosomal localization and promotes the centrosomal localization of CDK2. This chain is Centrosomal protein of 72 kDa (Cep72), found in Mus musculus (Mouse).